Consider the following 162-residue polypeptide: Dihydrofolate reductase (162 aa).

Positions 3 to 161 constitute a DHFR domain; sequence KITLIAACAE…TSYAFVHYLR (159 aa). 7 to 9 provides a ligand contact to substrate; it reads IAA. Residues 8–9 and 16–21 each bind NADP(+); these read AA and IGAGNA. A substrate-binding site is contributed by Asp-29. 45 to 48 contributes to the NADP(+) binding site; the sequence is GRKT. Position 60 (Arg-60) interacts with substrate. NADP(+)-binding positions include 65–68 and 98–103; these read ISRQ and MGGAQI. Thr-117 lines the substrate pocket.

This sequence belongs to the dihydrofolate reductase family.

The catalysed reaction is (6S)-5,6,7,8-tetrahydrofolate + NADP(+) = 7,8-dihydrofolate + NADPH + H(+). It participates in cofactor biosynthesis; tetrahydrofolate biosynthesis; 5,6,7,8-tetrahydrofolate from 7,8-dihydrofolate: step 1/1. Key enzyme in folate metabolism. Catalyzes an essential reaction for de novo glycine and purine synthesis, and for DNA precursor synthesis. This is Dihydrofolate reductase (folA) from Neisseria meningitidis serogroup A / serotype 4A (strain DSM 15465 / Z2491).